The chain runs to 130 residues: Small ribosomal subunit protein uS9 (130 aa).

The segment at 98-130 (LKRAGLLTRDPRMKERKKPGLKKARRSPQFSKR) is disordered. The segment covering 111 to 130 (KERKKPGLKKARRSPQFSKR) has biased composition (basic residues).

The protein belongs to the universal ribosomal protein uS9 family.

The polypeptide is Small ribosomal subunit protein uS9 (Staphylococcus haemolyticus (strain JCSC1435)).